The sequence spans 128 residues: Small ribosomal subunit protein uS11 (128 aa).

The protein belongs to the universal ribosomal protein uS11 family. In terms of assembly, part of the 30S ribosomal subunit. Interacts with proteins S7 and S18. Binds to IF-3.

Functionally, located on the platform of the 30S subunit, it bridges several disparate RNA helices of the 16S rRNA. Forms part of the Shine-Dalgarno cleft in the 70S ribosome. The sequence is that of Small ribosomal subunit protein uS11 from Acinetobacter baylyi (strain ATCC 33305 / BD413 / ADP1).